Consider the following 343-residue polypeptide: MSKIKPSKGAPYARILGVGGYRPTRVVPNEVILEKIDSSDEWIRSRSGIETRHWAGPEETVAAMSVEASGKALADAGIDASRIGAVVVSTVSHFSQTPAIATEIADRLGTDKAAAFDISAGCAGFGYGLTLAKGMVVEGSAEYVLVIGVERLSDLTDLEDRATAFLFGDGAGAVVVGPSQEPAIGPTVWGSEGDKAETIKQTVSWDRFRIGDVSELPLDSEGNVKFPAITQEGQAVFRWAVFEMAKVAQQALDAAGISPDDLDVFIPHQANVRIIDSMVKTLKLPEHVTVARDIRTTGNTSAASIPLAMERLLATGDARSGDTALVIGFGAGLVYAATVVTLP.

Residues Cys122 and His268 contribute to the active site. The segment at 269 to 273 is ACP-binding; the sequence is QANVR. The active site involves Asn299.

This sequence belongs to the thiolase-like superfamily. FabH family. Homodimer.

The protein resides in the cytoplasm. It carries out the reaction malonyl-[ACP] + acetyl-CoA + H(+) = 3-oxobutanoyl-[ACP] + CO2 + CoA. The protein operates within lipid metabolism; fatty acid biosynthesis. Functionally, essential enzyme that catalyzes the condensation reaction of fatty acid synthesis by the addition to an acyl acceptor of two carbons from malonyl-ACP. Catalyzes the first condensation reaction which initiates fatty acid synthesis and may therefore play a role in governing the total rate of fatty acid production. Possesses both acetoacetyl-ACP synthase and acetyl transacylase activities. Its substrate specificity determines the biosynthesis of branched-chain of fatty acids. This chain is Beta-ketoacyl-[acyl-carrier-protein] synthase III 1, found in Streptomyces coelicolor (strain ATCC BAA-471 / A3(2) / M145).